The following is a 307-amino-acid chain: Methionyl-tRNA formyltransferase (307 aa).

A (6S)-5,6,7,8-tetrahydrofolate-binding site is contributed by 110–113; that stretch reads SLLP.

It belongs to the Fmt family.

The enzyme catalyses L-methionyl-tRNA(fMet) + (6R)-10-formyltetrahydrofolate = N-formyl-L-methionyl-tRNA(fMet) + (6S)-5,6,7,8-tetrahydrofolate + H(+). Functionally, attaches a formyl group to the free amino group of methionyl-tRNA(fMet). The formyl group appears to play a dual role in the initiator identity of N-formylmethionyl-tRNA by promoting its recognition by IF2 and preventing the misappropriation of this tRNA by the elongation apparatus. The chain is Methionyl-tRNA formyltransferase from Rhodococcus erythropolis (strain PR4 / NBRC 100887).